Here is a 454-residue protein sequence, read N- to C-terminus: UDP-N-acetylmuramoylalanine--D-glutamate ligase (454 aa).

116 to 122 (GTNGKTS) contacts ATP.

This sequence belongs to the MurCDEF family.

It is found in the cytoplasm. It carries out the reaction UDP-N-acetyl-alpha-D-muramoyl-L-alanine + D-glutamate + ATP = UDP-N-acetyl-alpha-D-muramoyl-L-alanyl-D-glutamate + ADP + phosphate + H(+). The protein operates within cell wall biogenesis; peptidoglycan biosynthesis. Its function is as follows. Cell wall formation. Catalyzes the addition of glutamate to the nucleotide precursor UDP-N-acetylmuramoyl-L-alanine (UMA). This chain is UDP-N-acetylmuramoylalanine--D-glutamate ligase, found in Lachnoclostridium phytofermentans (strain ATCC 700394 / DSM 18823 / ISDg) (Clostridium phytofermentans).